Reading from the N-terminus, the 247-residue chain is T-cell surface glycoprotein CD8 alpha chain (247 aa).

Residues 1 to 27 form the signal peptide; sequence MASPLTRFLSLNLLLLGESIILGSGEA. The region spanning 28 to 139 is the Ig-like V-type domain; sequence KPQAPELRIF…SVISNSVMYF (112 aa). Topologically, residues 28–196 are extracellular; that stretch reads KPQAPELRIF…TGLDFACDIY (169 aa). A disulfide bridge links cysteine 53 with cysteine 129. Asparagine 69, asparagine 97, and asparagine 150 each carry an N-linked (GlcNAc...) asparagine glycan. Residues 156–182 form a disordered region; the sequence is PVLRTPSPVHPTGTSQPQRPEDCRPRG. A helical membrane pass occupies residues 197–217; sequence IWAPLAGICVALLLSLIITLI. Topologically, residues 218-247 are cytoplasmic; it reads CYHRSRKRVCKCPRPLVRQEGKPRPSEKIV.

Forms disulfide-linked heterodimers with CD8B at the cell surface. Also forms homodimers in several cell types including NK-cells or peripheral blood T-lymphocytes. Interacts with the MHC class I HLA-A/B2M dimer. Interacts with LCK in a zinc-dependent manner. Post-translationally, palmitoylated, but association with CD8B seems to be more important for the enrichment of CdD8A in lipid rafts. Phosphorylated in cytotoxic T-lymphocytes (CTLs) following activation.

It is found in the cell membrane. In terms of biological role, integral membrane glycoprotein that plays an essential role in the immune response and serves multiple functions in responses against both external and internal offenses. In T-cells, functions primarily as a coreceptor for MHC class I molecule:peptide complex. The antigens presented by class I peptides are derived from cytosolic proteins while class II derived from extracellular proteins. Interacts simultaneously with the T-cell receptor (TCR) and the MHC class I proteins presented by antigen presenting cells (APCs). In turn, recruits the Src kinase LCK to the vicinity of the TCR-CD3 complex. LCK then initiates different intracellular signaling pathways by phosphorylating various substrates ultimately leading to lymphokine production, motility, adhesion and activation of cytotoxic T-lymphocytes (CTLs). This mechanism enables CTLs to recognize and eliminate infected cells and tumor cells. In NK-cells, the presence of CD8A homodimers at the cell surface provides a survival mechanism allowing conjugation and lysis of multiple target cells. CD8A homodimer molecules also promote the survival and differentiation of activated lymphocytes into memory CD8 T-cells. The sequence is that of T-cell surface glycoprotein CD8 alpha chain (Cd8a) from Mus musculus (Mouse).